A 345-amino-acid chain; its full sequence is tRNA N6-adenosine threonylcarbamoyltransferase (345 aa).

Residues His-109 and His-113 each contribute to the Fe cation site. Substrate contacts are provided by residues 136–140 (TVSGG), Asp-169, Gly-182, Asp-186, and Asn-284. Residue Asp-312 coordinates Fe cation.

Belongs to the KAE1 / TsaD family. It depends on Fe(2+) as a cofactor.

The protein resides in the cytoplasm. It carries out the reaction L-threonylcarbamoyladenylate + adenosine(37) in tRNA = N(6)-L-threonylcarbamoyladenosine(37) in tRNA + AMP + H(+). Its function is as follows. Required for the formation of a threonylcarbamoyl group on adenosine at position 37 (t(6)A37) in tRNAs that read codons beginning with adenine. Is involved in the transfer of the threonylcarbamoyl moiety of threonylcarbamoyl-AMP (TC-AMP) to the N6 group of A37, together with TsaE and TsaB. TsaD likely plays a direct catalytic role in this reaction. This chain is tRNA N6-adenosine threonylcarbamoyltransferase, found in Chlorobium phaeovibrioides (strain DSM 265 / 1930) (Prosthecochloris vibrioformis (strain DSM 265)).